The following is a 114-amino-acid chain: Large ribosomal subunit protein P2 (114 aa).

Positions 84 to 114 (TDALQAGSKKGETKEGPKEESDEDMGFGLFD) are disordered. The segment covering 92–102 (KKGETKEGPKE) has biased composition (basic and acidic residues).

The protein belongs to the eukaryotic ribosomal protein P1/P2 family. In terms of assembly, P1 and P2 exist as dimers at the large ribosomal subunit. In terms of processing, phosphorylated.

In terms of biological role, plays an important role in the elongation step of protein synthesis. The chain is Large ribosomal subunit protein P2 (rpp-2) from Brugia malayi (Filarial nematode worm).